Here is a 373-residue protein sequence, read N- to C-terminus: Opsin Rh1 (373 aa).

At 1–54 (MDSFAAVATQLGPHFAALSNGSVVDKVTPDMAHLISPYWNQFPAMDPIWAKILT) the chain is on the extracellular side. N-linked (GlcNAc...) asparagine glycosylation is present at asparagine 20. A helical membrane pass occupies residues 55 to 75 (AYMIIIGMISWCGNGVVIYIF). Over 76–86 (ATTKSLRTPAN) the chain is Cytoplasmic. Residues 87–107 (LLVINLAISDFGIMITNTPMM) form a helical membrane-spanning segment. Residues 108–124 (GINLYFETWVLGPMMCD) lie on the Extracellular side of the membrane. A disulfide bridge connects residues cysteine 123 and cysteine 200. A helical transmembrane segment spans residues 125–145 (IYAGLGSAFGCSSIWSMCMIS). The Cytoplasmic segment spans residues 146–162 (LDRYQVIVKGMAGRPMT). A helical membrane pass occupies residues 163-183 (IPLALGKIAYIWFMSSIWCLA). Over 184–219 (PVFGWSRYVPEGNLTSCGIDYLERDWNPRSYLIFYS) the chain is Extracellular. An N-linked (GlcNAc...) asparagine glycan is attached at asparagine 196. A helical transmembrane segment spans residues 220–240 (IFVYYIPLFLICYSYWFIIAA). Over 241 to 276 (VSAHEKAMREQAKKMNVKSLRSSEDADKSAEGKLAK) the chain is Cytoplasmic. Residues 277-297 (VALVTISLWFMAWTPYLVINC) traverse the membrane as a helical segment. Residues 298–308 (MGLFKFEGLTP) are Extracellular-facing. A helical transmembrane segment spans residues 309–331 (LNTIWGACFAKSAACYNPIVYGI). N6-(retinylidene)lysine is present on lysine 319. At 332 to 373 (SHPKYRLALKEKCPCCVFGKVDDGKSSEAQSQATNSEAESKA) the chain is on the cytoplasmic side. The segment at 354 to 373 (DGKSSEAQSQATNSEAESKA) is disordered. Residues 358-373 (SEAQSQATNSEAESKA) are compositionally biased toward polar residues.

Belongs to the G-protein coupled receptor 1 family. Opsin subfamily. Post-translationally, phosphorylated on some or all of the serine and threonine residues present in the C-terminal region.

Its subcellular location is the cell projection. The protein resides in the rhabdomere membrane. Its function is as follows. Visual pigments are the light-absorbing molecules that mediate vision. They consist of an apoprotein, opsin, covalently linked to cis-retinal. The chain is Opsin Rh1 (ninaE) from Drosophila pseudoobscura pseudoobscura (Fruit fly).